Reading from the N-terminus, the 222-residue chain is Eukaryotic translation initiation factor 3 subunit K (222 aa).

The PCI domain maps to 46 to 208 (YDLEANLAVL…KIKTKNITEK (163 aa)).

It belongs to the eIF-3 subunit K family. Component of the eukaryotic translation initiation factor 3 (eIF-3) complex. The eIF-3 complex interacts with pix.

It is found in the cytoplasm. Component of the eukaryotic translation initiation factor 3 (eIF-3) complex, which is involved in protein synthesis of a specialized repertoire of mRNAs and, together with other initiation factors, stimulates binding of mRNA and methionyl-tRNAi to the 40S ribosome. The eIF-3 complex specifically targets and initiates translation of a subset of mRNAs involved in cell proliferation. This Drosophila grimshawi (Hawaiian fruit fly) protein is Eukaryotic translation initiation factor 3 subunit K.